The primary structure comprises 157 residues: Transcription elongation factor GreA (157 aa).

Residues 25-43 are compositionally biased toward basic and acidic residues; the sequence is EGRAKVAEQLSEARDKGDL. Residues 25-47 form a disordered region; the sequence is EGRAKVAEQLSEARDKGDLSENA. Residues 43 to 79 are a coiled coil; it reads LSENAEYDAAKEAQEILERRIAKLEELMINARVINKD.

This sequence belongs to the GreA/GreB family.

Functionally, necessary for efficient RNA polymerase transcription elongation past template-encoded arresting sites. The arresting sites in DNA have the property of trapping a certain fraction of elongating RNA polymerases that pass through, resulting in locked ternary complexes. Cleavage of the nascent transcript by cleavage factors such as GreA or GreB allows the resumption of elongation from the new 3'terminus. GreA releases sequences of 2 to 3 nucleotides. The polypeptide is Transcription elongation factor GreA (Amoebophilus asiaticus (strain 5a2)).